The chain runs to 101 residues: DNA-directed RNA polymerase subunit beta (101 aa).

Residues 74–101 (KRRLSALGPGGLSRERAGLEVRDVHSSH) form a disordered region. A compositionally biased stretch (basic and acidic residues) spans 86-101 (SRERAGLEVRDVHSSH).

This sequence belongs to the RNA polymerase beta chain family. The RNAP catalytic core consists of 2 alpha, 1 beta, 1 beta' and 1 omega subunit. When a sigma factor is associated with the core the holoenzyme is formed, which can initiate transcription.

The enzyme catalyses RNA(n) + a ribonucleoside 5'-triphosphate = RNA(n+1) + diphosphate. Its function is as follows. DNA-dependent RNA polymerase catalyzes the transcription of DNA into RNA using the four ribonucleoside triphosphates as substrates. This Mycolicibacterium peregrinum (Mycobacterium peregrinum) protein is DNA-directed RNA polymerase subunit beta (rpoB).